A 446-amino-acid chain; its full sequence is Signal recognition particle 54 kDa protein (446 aa).

Residues 103-110, 185-189, and 245-248 each bind GTP; these read GVQGTGKT, DTAGR, and TKMD.

The protein belongs to the GTP-binding SRP family. SRP54 subfamily. Part of the signal recognition particle protein translocation system, which is composed of SRP and FtsY. Archaeal SRP consists of a 7S RNA molecule of 300 nucleotides and two protein subunits: SRP54 and SRP19.

It is found in the cytoplasm. The catalysed reaction is GTP + H2O = GDP + phosphate + H(+). Its function is as follows. Involved in targeting and insertion of nascent membrane proteins into the cytoplasmic membrane. Binds to the hydrophobic signal sequence of the ribosome-nascent chain (RNC) as it emerges from the ribosomes. The SRP-RNC complex is then targeted to the cytoplasmic membrane where it interacts with the SRP receptor FtsY. This Metallosphaera sedula (strain ATCC 51363 / DSM 5348 / JCM 9185 / NBRC 15509 / TH2) protein is Signal recognition particle 54 kDa protein.